The sequence spans 272 residues: NADPH-dependent 7-cyano-7-deazaguanine reductase (272 aa).

Substrate is bound at residue V80–S82. NADPH is bound at residue S82 to K83. C178 functions as the Thioimide intermediate in the catalytic mechanism. Residue D185 is the Proton donor of the active site. Residue A217–E218 participates in substrate binding. Residue R246–G247 coordinates NADPH.

This sequence belongs to the GTP cyclohydrolase I family. QueF type 2 subfamily. Homodimer.

The protein localises to the cytoplasm. It catalyses the reaction 7-aminomethyl-7-carbaguanine + 2 NADP(+) = 7-cyano-7-deazaguanine + 2 NADPH + 3 H(+). It functions in the pathway tRNA modification; tRNA-queuosine biosynthesis. Its function is as follows. Catalyzes the NADPH-dependent reduction of 7-cyano-7-deazaguanine (preQ0) to 7-aminomethyl-7-deazaguanine (preQ1). The polypeptide is NADPH-dependent 7-cyano-7-deazaguanine reductase (Rickettsia typhi (strain ATCC VR-144 / Wilmington)).